A 65-amino-acid chain; its full sequence is Photosystem II reaction center protein J (65 aa).

The segment covering 1–18 has biased composition (basic and acidic residues); sequence MSSKLKGPDGRLPDRLPD. Residues 1–21 are disordered; it reads MSSKLKGPDGRLPDRLPDGRP. Residues 36 to 56 traverse the membrane as a helical segment; that stretch reads LWLVATAGGIAVIFVLGIFFY.

It belongs to the PsbJ family. As to quaternary structure, PSII is composed of 1 copy each of membrane proteins PsbA, PsbB, PsbC, PsbD, PsbE, PsbF, PsbH, PsbI, PsbJ, PsbK, PsbL, PsbM, PsbT, PsbX, PsbY, Psb30/Ycf12, peripheral proteins PsbO, CyanoQ (PsbQ), PsbU, PsbV and a large number of cofactors. It forms dimeric complexes.

It is found in the cellular thylakoid membrane. In terms of biological role, one of the components of the core complex of photosystem II (PSII). PSII is a light-driven water:plastoquinone oxidoreductase that uses light energy to abstract electrons from H(2)O, generating O(2) and a proton gradient subsequently used for ATP formation. It consists of a core antenna complex that captures photons, and an electron transfer chain that converts photonic excitation into a charge separation. The protein is Photosystem II reaction center protein J of Prochlorococcus marinus (strain SARG / CCMP1375 / SS120).